Consider the following 633-residue polypeptide: MINIYFNNNLCKQFHRGIKGYDVVADLFPELKNKAIAVKVNGESYDLSREITENCTFEVITTNSEEGLEIIRHDTAHIMAQAVKEIFPDTQITIGPTIKDGFYYDFATEHNFSSNDLEIIEKKMIEIINKNESFIREVWTREEAIKFFSSIGEDYKVKIISKIPNNENITVYKQGNFIDLCRGPHAPSTKTSKSFKLTKVSGSYWQGNSSNEKLQRIYGTAWRNEEELKSYLNNLIEIEKRDHRKIGKELELFHIQNEACGQVFWHKKGWTIYRTIENYIRKKLETNGYIEVKTPMLLNKELWEKSGHWDKFRENMFLSEAEDKVLAIKPMNCPCHIQIFNSKIRSYRDLPIRMAEFGICHRYEASGALHGLMRVRGFTQDDAHIFCTESQVISEALKFCNLLMEVYKDFGFTNILVKFSDRPENRAGSDETWDRAESALKKSVEAANLNYVLNPGDGAFYGPKLEFVLKDAIGREWQCGTLQMDFVLPERLGAYYVGSDGKKHHPIMLHRAILGTFERFIGILIEHHSGKFPIWLAPTQLSILTISEESIEYANSLKTKAEEHNIRVELDATNEKINYKIRNHIHKKIPVFWIVGKKEVNENSVSIRYLESNTQQVMPIDKALKTLLTCVSI.

Positions 1 to 61 constitute a TGS domain; sequence MINIYFNNNL…TENCTFEVIT (61 aa). Residues 242–533 form a catalytic region; that stretch reads DHRKIGKELE…LIEHHSGKFP (292 aa). Zn(2+) is bound by residues C333, H384, and H510.

Belongs to the class-II aminoacyl-tRNA synthetase family. As to quaternary structure, homodimer. Zn(2+) serves as cofactor.

The protein resides in the cytoplasm. It carries out the reaction tRNA(Thr) + L-threonine + ATP = L-threonyl-tRNA(Thr) + AMP + diphosphate + H(+). Catalyzes the attachment of threonine to tRNA(Thr) in a two-step reaction: L-threonine is first activated by ATP to form Thr-AMP and then transferred to the acceptor end of tRNA(Thr). Also edits incorrectly charged L-seryl-tRNA(Thr). The chain is Threonine--tRNA ligase from Ehrlichia canis (strain Jake).